Reading from the N-terminus, the 211-residue chain is uncharacterized protein (211 aa).

This is an uncharacterized protein from Homo sapiens (Human).